The primary structure comprises 1092 residues: Neural cell adhesion molecule 1-B (1092 aa).

The first 19 residues, 1–19, serve as a signal peptide directing secretion; it reads MLHIKDLIWTLYFIGAAVA. 5 consecutive Ig-like C2-type domains span residues 20-108, 113-202, 208-295, 303-397, and 400-489; these read LEVN…GTVN, QKLT…KDIQ, PPLI…EAIV, PKMT…FEVQ, and PKIR…FILV. Over 20 to 705 the chain is Extracellular; sequence LEVNIVPDQG…ATSASTGLGT (686 aa). 2 cysteine pairs are disulfide-bonded: cysteine 41–cysteine 93 and cysteine 136–cysteine 186. Asparagine 82 is a glycosylation site (N-linked (GlcNAc...) asparagine). Residues 149–153 and 158–162 contribute to the heparin site; these read RHKGK and KKDVR. Asparagine 219 carries N-linked (GlcNAc...) asparagine glycosylation. Cysteine 232 and cysteine 282 are disulfide-bonded. Residues asparagine 310, asparagine 341, asparagine 417, asparagine 443, and asparagine 472 are each glycosylated (N-linked (GlcNAc...) asparagine). Cysteine 323 and cysteine 379 are oxidised to a cystine. An intrachain disulfide couples cysteine 420 to cysteine 473. Fibronectin type-III domains follow at residues 493–592 and 595–691; these read TPSS…TQPV and EPSA…TAKP. A helical membrane pass occupies residues 706–723; that stretch reads GAIVGILIVTFVLLLVVV. The Cytoplasmic segment spans residues 724-1092; that stretch reads DVTCFFLNKC…TQRNVNESKA (369 aa). The segment covering 754-784 has biased composition (basic and acidic residues); the sequence is KDIEEGKAAFSKDESKEPIVEVRTEEERTPN. 2 disordered regions span residues 754 to 1005 and 1024 to 1092; these read KDIE…GGTF and TPAA…ESKA. Low complexity-rich tracts occupy residues 820-832 and 839-851; these read TTVT…ITET and SPTS…TSST. The segment covering 860 to 871 has biased composition (polar residues); sequence DSNTVQSVQATP. A compositionally biased stretch (low complexity) spans 917 to 929; it reads PSAATSAAEPPTA. A compositionally biased stretch (polar residues) spans 968 to 978; sequence AQPSTVKSPTE. Over residues 1050–1068 the composition is skewed to basic and acidic residues; sequence AKTEKTQVEENSKPEETDV. Over residues 1080-1092 the composition is skewed to polar residues; it reads NEATQRNVNESKA.

In terms of processing, polysialylated by ST8SIA2 and ST8SIA4. Polysialylation modulates cell interactions by confering both attractive and repulsive properties that are highly regulated by ST8SIA2 and ST8SIA4. Polysialylation is formed on a-2,3-linked sialic acid of core glycans.

It is found in the cell membrane. Functionally, this protein is a cell adhesion molecule involved in neuron-neuron adhesion, neurite fasciculation, outgrowth of neurites, etc. The protein is Neural cell adhesion molecule 1-B of Xenopus laevis (African clawed frog).